Consider the following 79-residue polypeptide: RNA-binding protein Hfq (79 aa).

The 60-residue stretch at 10 to 69 (DPFLNALRKEHVPVSIYLVNGIKLQGNIESFDQYVVLLRNTVTQMVYKHAISTVVPARAV) folds into the Sm domain.

It belongs to the Hfq family. As to quaternary structure, homohexamer.

RNA chaperone that binds small regulatory RNA (sRNAs) and mRNAs to facilitate mRNA translational regulation in response to envelope stress, environmental stress and changes in metabolite concentrations. Also binds with high specificity to tRNAs. The protein is RNA-binding protein Hfq of Cupriavidus metallidurans (strain ATCC 43123 / DSM 2839 / NBRC 102507 / CH34) (Ralstonia metallidurans).